The chain runs to 319 residues: Beta-sarcoglycan (319 aa).

Residues 1 to 10 are compositionally biased toward low complexity; sequence MAAAAAAAAA. Positions 1-33 are disordered; it reads MAAAAAAAAAEQQSSNGPVKKSMREKAVERRNV. Residues 1–66 are Cytoplasmic-facing; it reads MAAAAAAAAA…GLRGRKGNLA (66 aa). A compositionally biased stretch (basic and acidic residues) spans 22-33; that stretch reads SMREKAVERRNV. A helical; Signal-anchor for type II membrane protein membrane pass occupies residues 67–87; sequence ICVIILLFILAVINLIITLVI. Residues 88–318 are Extracellular-facing; sequence WAVIRIGPNG…QISDNPCGNT (231 aa). N-linked (GlcNAc...) asparagine glycosylation is found at Asn159, Asn212, and Asn259. 2 disulfides stabilise this stretch: Cys289-Cys315 and Cys291-Cys308.

It belongs to the sarcoglycan beta/delta/gamma/zeta family. As to quaternary structure, cross-link to form 2 major subcomplexes: one consisting of SGCB, SGCD and SGCG and the other consisting of SGCB and SGCD. The association between SGCB and SGCG is particularly strong while SGCA is loosely associated with the other sarcoglycans. Post-translationally, disulfide bonds are present.

It is found in the cell membrane. The protein localises to the sarcolemma. The protein resides in the cytoplasm. Its subcellular location is the cytoskeleton. In terms of biological role, component of the sarcoglycan complex, a subcomplex of the dystrophin-glycoprotein complex which forms a link between the F-actin cytoskeleton and the extracellular matrix. The polypeptide is Beta-sarcoglycan (SGCB) (Pongo abelii (Sumatran orangutan)).